Reading from the N-terminus, the 209-residue chain is High-affinity nitrate transporter 3.2 (209 aa).

The N-terminal stretch at 1–22 (MAIHTLLFVSLLIFSLIESSSG) is a signal peptide. A helical transmembrane segment spans residues 177–197 (LDIASTFFSVFSVVSLFVFFV).

It belongs to the NAR2 family. In terms of tissue distribution, bearly detected in roots and shoots.

It is found in the cell membrane. Its function is as follows. Acts as a dual component transporter with NTR2.1. Required for high-affinity nitrate transport. This Arabidopsis thaliana (Mouse-ear cress) protein is High-affinity nitrate transporter 3.2.